The chain runs to 337 residues: Schlafen family member 1 (337 aa).

Residues 147-166 form a disordered region; it reads AGGRSPSARPSDRPGDDTQE. Residues 156–166 are compositionally biased toward basic and acidic residues; sequence PSDRPGDDTQE.

This sequence belongs to the Schlafen family. In terms of assembly, interacts with DNAJB6; promoting nuclear translocation and ability to promote cell-cycle arrest. Mainly expressed in the thymus, lymph node and spleen. Specifically expressed in T-lineage cells, but not in B-cells. Strongly up-regulated during the differentiation from CD4(+)CD8(+) double-positive (DP) to CD4(+) or CD8(+) single-positive (SP) thymocytes. Highly expressed in quiescent single-positive thymocytes and T-cells. The expression substantially decreases after TCR (T-cell receptor)-mediated activation.

It localises to the cytoplasm. It is found in the nucleus. Protein expressed in resting T-cells, which is required for maintaining T-cells in the quiescent state. Acts by promoting cell-cycle arrest of T-cells through inhibiting the expression of cyclin-D1 (CCND1). This Mus musculus (Mouse) protein is Schlafen family member 1.